Consider the following 100-residue polypeptide: Urease subunit gamma (100 aa).

The protein belongs to the urease gamma subunit family. Heterotrimer of UreA (gamma), UreB (beta) and UreC (alpha) subunits. Three heterotrimers associate to form the active enzyme.

It is found in the cytoplasm. It catalyses the reaction urea + 2 H2O + H(+) = hydrogencarbonate + 2 NH4(+). It participates in nitrogen metabolism; urea degradation; CO(2) and NH(3) from urea (urease route): step 1/1. The chain is Urease subunit gamma from Paraburkholderia phymatum (strain DSM 17167 / CIP 108236 / LMG 21445 / STM815) (Burkholderia phymatum).